A 298-amino-acid polypeptide reads, in one-letter code: Urease accessory protein UreD (298 aa).

The protein belongs to the UreD family. As to quaternary structure, ureD, UreF and UreG form a complex that acts as a GTP-hydrolysis-dependent molecular chaperone, activating the urease apoprotein by helping to assemble the nickel containing metallocenter of UreC. The UreE protein probably delivers the nickel.

Its subcellular location is the cytoplasm. In terms of biological role, required for maturation of urease via the functional incorporation of the urease nickel metallocenter. In Frankia alni (strain DSM 45986 / CECT 9034 / ACN14a), this protein is Urease accessory protein UreD.